The sequence spans 510 residues: Chromosomal replication initiator protein DnaA (510 aa).

The domain I, interacts with DnaA modulators stretch occupies residues 1–74; sequence MHTDLWERGC…EATLSELAGK (74 aa). The domain II stretch occupies residues 74–173; the sequence is KPVRLELSLL…PTLSPAVSRG (100 aa). Residues 125 to 168 form a disordered region; it reads ARHDPQSVVPTPGGSANGRAAPRVGEPGGPVGTSTLPVAPTLSP. The interval 174–390 is domain III, AAA+ region; that stretch reads RLNPALTFDT…GALRKVLAYS (217 aa). The ATP site is built by Gly218, Gly220, Lys221, and Thr222. A domain IV, binds dsDNA region spans residues 391-510; that stretch reads RFSHKEISIN…LHVLEQTLKG (120 aa).

The protein belongs to the DnaA family. Oligomerizes as a right-handed, spiral filament on DNA at oriC.

The protein localises to the cytoplasm. Functionally, plays an essential role in the initiation and regulation of chromosomal replication. ATP-DnaA binds to the origin of replication (oriC) to initiate formation of the DNA replication initiation complex once per cell cycle. Binds the DnaA box (a 9 base pair repeat at the origin) and separates the double-stranded (ds)DNA. Forms a right-handed helical filament on oriC DNA; dsDNA binds to the exterior of the filament while single-stranded (ss)DNA is stabiized in the filament's interior. The ATP-DnaA-oriC complex binds and stabilizes one strand of the AT-rich DNA unwinding element (DUE), permitting loading of DNA polymerase. After initiation quickly degrades to an ADP-DnaA complex that is not apt for DNA replication. Binds acidic phospholipids. The protein is Chromosomal replication initiator protein DnaA of Leptothrix cholodnii (strain ATCC 51168 / LMG 8142 / SP-6) (Leptothrix discophora (strain SP-6)).